Reading from the N-terminus, the 235-residue chain is Orotidine 5'-phosphate decarboxylase (235 aa).

Substrate contacts are provided by residues D12, K34, 61-70, T116, R177, Q186, G206, and R207; that span reads DMKLLDIDNT. K63 functions as the Proton donor in the catalytic mechanism.

Belongs to the OMP decarboxylase family. Type 1 subfamily. In terms of assembly, homodimer.

It carries out the reaction orotidine 5'-phosphate + H(+) = UMP + CO2. The protein operates within pyrimidine metabolism; UMP biosynthesis via de novo pathway; UMP from orotate: step 2/2. Its function is as follows. Catalyzes the decarboxylation of orotidine 5'-monophosphate (OMP) to uridine 5'-monophosphate (UMP). The polypeptide is Orotidine 5'-phosphate decarboxylase (Rhizobium johnstonii (strain DSM 114642 / LMG 32736 / 3841) (Rhizobium leguminosarum bv. viciae)).